Consider the following 162-residue polypeptide: Endoribonuclease YbeY (162 aa).

Positions 117, 121, and 127 each coordinate Zn(2+).

The protein belongs to the endoribonuclease YbeY family. Zn(2+) is required as a cofactor.

It is found in the cytoplasm. Its function is as follows. Single strand-specific metallo-endoribonuclease involved in late-stage 70S ribosome quality control and in maturation of the 3' terminus of the 16S rRNA. This chain is Endoribonuclease YbeY, found in Francisella tularensis subsp. novicida (strain U112).